A 29-amino-acid chain; its full sequence is Cytochrome b6-f complex subunit 8 (29 aa).

Residues 3 to 23 (ITSIAWGALMVVFTFSLSLVV) traverse the membrane as a helical segment.

It belongs to the PetN family. As to quaternary structure, the 4 large subunits of the cytochrome b6-f complex are cytochrome b6, subunit IV (17 kDa polypeptide, PetD), cytochrome f and the Rieske protein, while the 4 small subunits are PetG, PetL, PetM and PetN. The complex functions as a dimer.

The protein resides in the plastid membrane. Its function is as follows. Component of the cytochrome b6-f complex, which mediates electron transfer between photosystem II (PSII) and photosystem I (PSI), cyclic electron flow around PSI, and state transitions. The protein is Cytochrome b6-f complex subunit 8 of Aneura mirabilis (Parasitic liverwort).